The following is a 130-amino-acid chain: Ribonuclease P protein component (130 aa).

This sequence belongs to the RnpA family. Consists of a catalytic RNA component (M1 or rnpB) and a protein subunit.

The catalysed reaction is Endonucleolytic cleavage of RNA, removing 5'-extranucleotides from tRNA precursor.. Its function is as follows. RNaseP catalyzes the removal of the 5'-leader sequence from pre-tRNA to produce the mature 5'-terminus. It can also cleave other RNA substrates such as 4.5S RNA. The protein component plays an auxiliary but essential role in vivo by binding to the 5'-leader sequence and broadening the substrate specificity of the ribozyme. This chain is Ribonuclease P protein component, found in Psychrobacter sp. (strain PRwf-1).